We begin with the raw amino-acid sequence, 290 residues long: Inositol-1-monophosphatase (290 aa).

The Mg(2+) site is built by Glu-83, Asp-104, Ile-106, and Asp-107. A substrate-binding site is contributed by Glu-83. Substrate is bound by residues 106–109 (IDGT), Arg-206, and Asp-235. Asp-235 provides a ligand contact to Mg(2+).

The protein belongs to the inositol monophosphatase superfamily. Requires Mg(2+) as cofactor.

It catalyses the reaction a myo-inositol phosphate + H2O = myo-inositol + phosphate. The chain is Inositol-1-monophosphatase (suhB) from Mycobacterium bovis (strain ATCC BAA-935 / AF2122/97).